Here is a 266-residue protein sequence, read N- to C-terminus: GTP-binding protein Rhes (266 aa).

26 to 33 (GASRVGKS) contacts GTP. Positions 48 to 56 (YTPTIEDFH) match the Effector region motif. GTP-binding positions include 73–77 (DTSGN) and 140–143 (NKND). The tract at residues 189-235 (MAKLPHEMSPALHRKISVQYGDAFHPRPFCMRRVKEMDAYGMVSPFA) is interaction with GNB1, GNB2 and GNB3. Cysteine 263 carries the cysteine methyl ester modification. Cysteine 263 is lipidated: S-farnesyl cysteine. Residues 264-266 (TIQ) constitute a propeptide, removed in mature form.

Belongs to the small GTPase superfamily. RasD family. Monomer (Potential). Interacts with PIK3CA and UBE2I. Interacts with GNB1, GNB2 and GNB3. Interacts with HTT; interacts with mutant HTT (mHTT) with a much higher affinity than wild type HTT. In terms of processing, farnesylated. Farnesylation is required for membrane targeting. As to expression, pancreatic endocrine cells (islets of Langerhans).

It localises to the cell membrane. GTPase signaling protein that binds to and hydrolyzes GTP. Regulates signaling pathways involving G-proteins-coupled receptor and heterotrimeric proteins such as GNB1, GNB2 and GNB3. May be involved in selected striatal competencies, mainly locomotor activity and motor coordination. This chain is GTP-binding protein Rhes (RASD2), found in Homo sapiens (Human).